A 372-amino-acid polypeptide reads, in one-letter code: Cytochrome b (372 aa).

The next 4 membrane-spanning stretches (helical) occupy residues F25–I45, W69–I90, W105–L125, and F170–I190. Positions 75 and 89 each coordinate heme b. The heme b site is built by H174 and H188. H193 is a binding site for a ubiquinone. 4 helical membrane passes run Y218 to S238, L280 to H300, M312 to S332, and Y339 to P358.

This sequence belongs to the cytochrome b family. The cytochrome bc1 complex contains 3 respiratory subunits (MT-CYB, CYC1 and UQCRFS1), 2 core proteins (UQCRC1 and UQCRC2) and probably 6 low-molecular weight proteins. It depends on heme b as a cofactor.

The protein localises to the mitochondrion inner membrane. Functionally, component of the ubiquinol-cytochrome c reductase complex (complex III or cytochrome b-c1 complex) that is part of the mitochondrial respiratory chain. The b-c1 complex mediates electron transfer from ubiquinol to cytochrome c. Contributes to the generation of a proton gradient across the mitochondrial membrane that is then used for ATP synthesis. This chain is Cytochrome b (MT-CYB), found in Acrochordus granulatus (Rasp-skinned water snake).